We begin with the raw amino-acid sequence, 239 residues long: Type III effector protein HopBA1 (239 aa).

Residues 1-20 (MLNRISSSSPTSYVSSGSSS) show a composition bias toward low complexity. The disordered stretch occupies residues 1–31 (MLNRISSSSPTSYVSSGSSSAGINPSINVRP).

The protein localises to the secreted. It localises to the host cell. Virulence factor recognized by the A.thaliana disease resistance protein RBA1, which triggers plant cell death. HopBA1 enhances RBA1 self-association, which is necessary for ectopic autoactivation of host cell death. This Pseudomonas syringae pv. aptata protein is Type III effector protein HopBA1.